Reading from the N-terminus, the 198-residue chain is Ribonuclease HII (198 aa).

The region spanning 11-198 (TCIAGVDEVG…APVKRALGLA (188 aa)) is the RNase H type-2 domain. A divalent metal cation-binding residues include Asp17, Glu18, and Asp109.

It belongs to the RNase HII family. Mn(2+) is required as a cofactor. Mg(2+) serves as cofactor.

The protein localises to the cytoplasm. The catalysed reaction is Endonucleolytic cleavage to 5'-phosphomonoester.. Its function is as follows. Endonuclease that specifically degrades the RNA of RNA-DNA hybrids. In Pectobacterium carotovorum subsp. carotovorum (strain PC1), this protein is Ribonuclease HII.